Reading from the N-terminus, the 345-residue chain is Phosphoribosylformylglycinamidine cyclo-ligase (345 aa).

This sequence belongs to the AIR synthase family.

It is found in the cytoplasm. It catalyses the reaction 2-formamido-N(1)-(5-O-phospho-beta-D-ribosyl)acetamidine + ATP = 5-amino-1-(5-phospho-beta-D-ribosyl)imidazole + ADP + phosphate + H(+). The protein operates within purine metabolism; IMP biosynthesis via de novo pathway; 5-amino-1-(5-phospho-D-ribosyl)imidazole from N(2)-formyl-N(1)-(5-phospho-D-ribosyl)glycinamide: step 2/2. This is Phosphoribosylformylglycinamidine cyclo-ligase from Shewanella sp. (strain MR-7).